The primary structure comprises 856 residues: DNA mismatch repair protein MutS (856 aa).

618-625 is an ATP binding site; the sequence is GPNMGGKS.

Belongs to the DNA mismatch repair MutS family.

Functionally, this protein is involved in the repair of mismatches in DNA. It is possible that it carries out the mismatch recognition step. This protein has a weak ATPase activity. This Shewanella baltica (strain OS195) protein is DNA mismatch repair protein MutS.